We begin with the raw amino-acid sequence, 219 residues long: Cytidylate kinase (219 aa).

21-29 (GPAASGKGT) is a binding site for ATP.

It belongs to the cytidylate kinase family. Type 1 subfamily.

The protein localises to the cytoplasm. The catalysed reaction is CMP + ATP = CDP + ADP. The enzyme catalyses dCMP + ATP = dCDP + ADP. The polypeptide is Cytidylate kinase (Rickettsia rickettsii (strain Iowa)).